Reading from the N-terminus, the 395-residue chain is uncharacterized protein (395 aa).

Residues Lys-182–Lys-238 are a coiled coil.

This is an uncharacterized protein from Acanthamoeba polyphaga (Amoeba).